Here is a 630-residue protein sequence, read N- to C-terminus: Cyclin-T1-2 (630 aa).

A compositionally biased stretch (low complexity) spans 288–297 (QSSLSVSSSS). Disordered regions lie at residues 288-313 (QSSL…DSSQ) and 410-439 (RSGD…VEPP). The span at 421–439 (GGSSLTDVDSKSTQSVEPP) shows a compositional bias: polar residues.

The protein belongs to the cyclin family. Cyclin T subfamily.

This Oryza sativa subsp. japonica (Rice) protein is Cyclin-T1-2 (CYCT1_2).